The following is a 132-amino-acid chain: Large ribosomal subunit protein uL14 (132 aa).

The protein belongs to the universal ribosomal protein uL14 family. In terms of assembly, part of the 50S ribosomal subunit. Forms a cluster with proteins L3 and L24e, part of which may contact the 16S rRNA in 2 intersubunit bridges.

Binds to 23S rRNA. Forms part of two intersubunit bridges in the 70S ribosome. This is Large ribosomal subunit protein uL14 from Methanoregula boonei (strain DSM 21154 / JCM 14090 / 6A8).